An 89-amino-acid polypeptide reads, in one-letter code: MSLDKGTKEEITKKFQLHEKDTGSADVQIAILTERITELTEHLKRAPKDHGSRLALLKLVGQRRRLLDYLNSTDTKRYQTLINKLKLRR.

The protein belongs to the universal ribosomal protein uS15 family. Part of the 30S ribosomal subunit. Forms a bridge to the 50S subunit in the 70S ribosome, contacting the 23S rRNA.

Functionally, one of the primary rRNA binding proteins, it binds directly to 16S rRNA where it helps nucleate assembly of the platform of the 30S subunit by binding and bridging several RNA helices of the 16S rRNA. In terms of biological role, forms an intersubunit bridge (bridge B4) with the 23S rRNA of the 50S subunit in the ribosome. This Protochlamydia amoebophila (strain UWE25) protein is Small ribosomal subunit protein uS15.